Reading from the N-terminus, the 243-residue chain is LexA repressor 2 (243 aa).

The segment at residues 48 to 68 (IREIGDAVGLTSTSSVAHQLR) is a DNA-binding region (H-T-H motif). Residues Ser-167 and Lys-204 each act as for autocatalytic cleavage activity in the active site.

The protein belongs to the peptidase S24 family. As to quaternary structure, homodimer.

The enzyme catalyses Hydrolysis of Ala-|-Gly bond in repressor LexA.. In terms of biological role, represses a number of genes involved in the response to DNA damage (SOS response), including recA and lexA. In the presence of single-stranded DNA, RecA interacts with LexA causing an autocatalytic cleavage which disrupts the DNA-binding part of LexA, leading to derepression of the SOS regulon and eventually DNA repair. This chain is LexA repressor 2, found in Nocardia farcinica (strain IFM 10152).